We begin with the raw amino-acid sequence, 130 residues long: DNA-directed RNA polymerase subunit omega (130 aa).

The segment at 110–130 is disordered; sequence EELLKGLEGLAPPEEQPEEDE.

Belongs to the RNA polymerase subunit omega family. As to quaternary structure, the RNAP catalytic core consists of 2 alpha, 1 beta, 1 beta' and 1 omega subunit. When a sigma factor is associated with the core the holoenzyme is formed, which can initiate transcription.

The catalysed reaction is RNA(n) + a ribonucleoside 5'-triphosphate = RNA(n+1) + diphosphate. In terms of biological role, promotes RNA polymerase assembly. Latches the N- and C-terminal regions of the beta' subunit thereby facilitating its interaction with the beta and alpha subunits. The protein is DNA-directed RNA polymerase subunit omega of Bradyrhizobium sp. (strain BTAi1 / ATCC BAA-1182).